We begin with the raw amino-acid sequence, 186 residues long: Ribosome-recycling factor (186 aa).

The protein belongs to the RRF family.

The protein resides in the cytoplasm. Functionally, responsible for the release of ribosomes from messenger RNA at the termination of protein biosynthesis. May increase the efficiency of translation by recycling ribosomes from one round of translation to another. The chain is Ribosome-recycling factor from Ralstonia pickettii (strain 12J).